Consider the following 581-residue polypeptide: MAMSQESLTFKDVFVDFTLEEWQQLDSAQKNLYRDVMLENYSHLVSVGHLVGKPDVIFRLGPGDESWMADGGTPVRTCAGEDRPEVWEVDEQIDHYKESQDKFLWQAAFIGKETLKDESGQECKICRKIIYLNTDFVSVKQRLPKYYSWERCSKHHLNFLGQNRSYVRKKDDGCKAYWKVCLHYNLHKAQPAERFFDPNQRGKALHQKQALRKSQRSQTGEKLYKCTECGKVFIQKANLVVHQRTHTGEKPYECCECAKAFSQKSTLIAHQRTHTGEKPYECSECGKTFIQKSTLIKHQRTHTGEKPFVCDKCPKAFKSSYHLIRHEKTHIRQAFYKGIKCTTSSLIYQRIHTSEKPQCSEHGKASDEKPSPTKHWRTHTKENIYECSKCGKSFRGKSHLSVHQRIHTGEKPYECSICGKTFSGKSHLSVHHRTHTGEKPYECRRCGKAFGEKSTLIVHQRMHTGEKPYKCNECGKAFSEKSPLIKHQRIHTGERPYECTDCKKAFSRKSTLIKHQRIHTGEKPYKCSECGKAFSVKSTLIVHHRTHTGEKPYECRDCGKAFSGKSTLIKHQRSHTGDKNL.

In terms of domain architecture, KRAB spans 8-79 (LTFKDVFVDF…DGGTPVRTCA (72 aa)). 4 C2H2-type zinc fingers span residues 224–246 (YKCTECGKVFIQKANLVVHQRTH), 252–274 (YECCECAKAFSQKSTLIAHQRTH), 280–302 (YECSECGKTFIQKSTLIKHQRTH), and 308–330 (FVCDKCPKAFKSSYHLIRHEKTH). Positions 357–371 (PQCSEHGKASDEKPS) are enriched in basic and acidic residues. The interval 357 to 377 (PQCSEHGKASDEKPSPTKHWR) is disordered. C2H2-type zinc fingers lie at residues 385-407 (YECSKCGKSFRGKSHLSVHQRIH), 413-435 (YECSICGKTFSGKSHLSVHHRTH), 441-463 (YECRRCGKAFGEKSTLIVHQRMH), 469-491 (YKCNECGKAFSEKSPLIKHQRIH), 497-519 (YECTDCKKAFSRKSTLIKHQRIH), 525-547 (YKCSECGKAFSVKSTLIVHHRTH), and 553-575 (YECRDCGKAFSGKSTLIKHQRSH).

It belongs to the krueppel C2H2-type zinc-finger protein family. In terms of tissue distribution, expressed in testis.

The protein localises to the nucleus. In terms of biological role, may be involved in transcriptional regulation. The protein is Zinc finger protein 674 (ZNF674) of Homo sapiens (Human).